The following is a 425-amino-acid chain: Diacetylchitobiose binding protein DasA (425 aa).

The first 20 residues, 1–20, serve as a signal peptide directing secretion; it reads MKRKLIAAIGIAGMMVSIAA. Cys21 is lipidated: N-palmitoyl cysteine. The S-diacylglycerol cysteine moiety is linked to residue Cys21.

This sequence belongs to the bacterial solute-binding protein 1 family. The complex is composed of two ATP-binding proteins (MsiK), two transmembrane proteins (DasB and DasC) and a solute-binding protein (DasA).

The protein resides in the cell membrane. In terms of biological role, part of the ABC transporter complex DasABC-MsiK involved in N,N'-diacetylchitobiose ((GlcNAc)2) uptake. Binds specifically to (GlcNAc)2. Can also bind to GlcNAc, (GlcNAc)3, (GlcNAc)4 and (GlcNAc)5, but it exhibits the highest affinity for (GlcNAc)2. Involved in the control of morphological differentiation. This is Diacetylchitobiose binding protein DasA from Streptomyces coelicolor (strain ATCC BAA-471 / A3(2) / M145).